The following is a 578-amino-acid chain: Acyl-CoA synthetase ACTT5 (578 aa).

211–222 (RLTTSGTTGLPK) provides a ligand contact to AMP. An AMP-binding region spans residues 472–551 (ELEAALLQAK…DEIPRSPTGK (80 aa)).

Belongs to the ATP-dependent AMP-binding enzyme family.

The protein operates within mycotoxin biosynthesis. In terms of biological role, acyl-CoA synthetase; part of the gene clusters that mediate the biosynthesis of the host-selective toxins (HSTs) ACT-toxins responsible for brown spot of tangerine disease by the tangerine pathotype which affects tangerines and mandarins. ACT-toxins consist of three moieties, 9,10-epoxy-8-hydroxy-9-methyl-decatrienoic acid (EDA), valine and a polyketide. ACT-toxin I is toxic to both citrus and pear; toxin II the 5''-deoxy derivative of ACT-toxin I, is highly toxic to pear and slightly toxic to citrus. On cellular level, ACT-toxins affect plasma membrane of susceptible cells and cause a sudden increase in loss of K(+) after a few minutes of toxin treatment. The acyl-CoA ligase ACTT1, the hydrolase ACTT2, the enoyl-CoA hydratases ACTT3 and ACTT6, and the acyl-CoA synthetase ACTT5 are all involved in the biosynthesis of the AK-, AF- and ACT-toxin common 9,10-epoxy-8-hydroxy-9-methyl-decatrienoic acid (EDA) structural moiety. The exact role of each enzyme, and of additional enzymes identified within the AF-toxin clusters have still to be determined. On the other hand, ACTTS1 to ACTTS4 are specific to the tangerine pathotype. The function of ACTTS3 is to elongate the polyketide chain portion of ACT-toxin that is unique to this toxin. The enoyl-reductase ACTTS2 might complement the missing enoyl-reductase (ER) domain in ACTTS3 in the synthesis of the polyketide portion of ACT-toxin. The roles of the nonribosomal peptide synthetases-related proteins ACTTS1 and ACTTS4 have also still not been elucidated. The sequence is that of Acyl-CoA synthetase ACTT5 from Alternaria alternata (Alternaria rot fungus).